Here is a 124-residue protein sequence, read N- to C-terminus: uncharacterized protein (124 aa).

This is an uncharacterized protein from Magallana gigas (Pacific oyster).